Here is a 184-residue protein sequence, read N- to C-terminus: Helix-loop-helix protein ngn-1 (184 aa).

Residues 1–55 (MYHHSPFYPHHLQTGEQDLDMERENDMDQNSKNSTQKPVKREKRRYRCRKRSPAT) are disordered. Positions 28-37 (DQNSKNSTQK) are enriched in polar residues. Residues 38–52 (PVKREKRRYRCRKRS) are compositionally biased toward basic residues. Residues 62-75 (VRRDKANARERRRM) form a basic motif region. A bHLH domain is found at 62-114 (VRRDKANARERRRMNSLNDALEHLRGILPALPDEPKMTKIETLRKAQEYIASL). Positions 76–114 (NSLNDALEHLRGILPALPDEPKMTKIETLRKAQEYIASL) are helix-loop-helix motif. The disordered stretch occupies residues 164 to 184 (SNPPSQMYYHHHHQSPSFPHH). Residues 172-184 (YHHHHQSPSFPHH) show a composition bias toward basic residues.

In terms of assembly, interacts with hlh-2; the interaction is direct.

It is found in the nucleus. Acts as a transcriptional regulator. Regulates expression of various genes, including homeobox protein unc-42 and helix-loop-helix protein hlh-34. Required for embryonic viability, neuromuscular development, organization of the nerve ring and neuronal cell body location. Regulates AIY neuron axon morphology and cell fate. Plays a role in cell autonomously establishing a neuronal left-right asymmetry. Involved in regulating glial specification. The polypeptide is Helix-loop-helix protein ngn-1 (Caenorhabditis elegans).